Here is a 104-residue protein sequence, read N- to C-terminus: Small ribosomal subunit protein uS10 (104 aa).

It belongs to the universal ribosomal protein uS10 family. In terms of assembly, part of the 30S ribosomal subunit.

Involved in the binding of tRNA to the ribosomes. The protein is Small ribosomal subunit protein uS10 of Alkaliphilus oremlandii (strain OhILAs) (Clostridium oremlandii (strain OhILAs)).